The following is a 78-amino-acid chain: UPF0270 protein YPO0179/y3960/YP_0178 (78 aa).

It belongs to the UPF0270 family.

This Yersinia pestis protein is UPF0270 protein YPO0179/y3960/YP_0178.